The chain runs to 156 residues: MTSVIYPGTFDPITNGHLDIIERSAVIFPRVLVAVANSPSKKPLFSLEERVELVRQSVVHLSNVEVFGFSDLLANVIKQHNISAIIRGVRTTTDFEYELQLAALNRLLTKGVDSLFFPPAEKWAFVSSTIVREIYLHGGDVAELVPVPVFNALKAR.

Thr-9 contacts substrate. ATP contacts are provided by residues 9–10 (TF) and His-17. Residues Lys-41, Leu-73, and Arg-87 each coordinate substrate. Residues 88–90 (GVR), Glu-98, and 123–129 (WAFVSST) each bind ATP.

The protein belongs to the bacterial CoaD family. Homohexamer. Mg(2+) is required as a cofactor.

It localises to the cytoplasm. It carries out the reaction (R)-4'-phosphopantetheine + ATP + H(+) = 3'-dephospho-CoA + diphosphate. It participates in cofactor biosynthesis; coenzyme A biosynthesis; CoA from (R)-pantothenate: step 4/5. Functionally, reversibly transfers an adenylyl group from ATP to 4'-phosphopantetheine, yielding dephospho-CoA (dPCoA) and pyrophosphate. In Haemophilus influenzae (strain ATCC 51907 / DSM 11121 / KW20 / Rd), this protein is Phosphopantetheine adenylyltransferase.